Reading from the N-terminus, the 67-residue chain is Large ribosomal subunit protein uL29 (67 aa).

This sequence belongs to the universal ribosomal protein uL29 family.

In Polaromonas naphthalenivorans (strain CJ2), this protein is Large ribosomal subunit protein uL29.